The chain runs to 851 residues: DNA mismatch repair protein MutS (851 aa).

Residue 602–609 participates in ATP binding; it reads GPNMSGKS.

The protein belongs to the DNA mismatch repair MutS family.

Its function is as follows. This protein is involved in the repair of mismatches in DNA. It is possible that it carries out the mismatch recognition step. This protein has a weak ATPase activity. This is DNA mismatch repair protein MutS from Streptococcus pyogenes serotype M6 (strain ATCC BAA-946 / MGAS10394).